The chain runs to 70 residues: Large ribosomal subunit protein bL31 (70 aa).

The Zn(2+) site is built by C16, C18, C37, and C40.

The protein belongs to the bacterial ribosomal protein bL31 family. Type A subfamily. In terms of assembly, part of the 50S ribosomal subunit. Zn(2+) serves as cofactor.

Binds the 23S rRNA. This Shewanella sediminis (strain HAW-EB3) protein is Large ribosomal subunit protein bL31.